Here is a 469-residue protein sequence, read N- to C-terminus: MTDLRFRTYTGVSKVVGPLMVLDGVEGIGYGEIAEITLPGGEVRIGQVLETTTTRAMVQVFRGTRDLDTEKTQVRFRGEPMKISLSSDMLGRTFDGSARPIDGGGPVIPECIRDIYGSPINPSAREHPRDSIQTGISSIDGMNTLVRGQKLPIFSGAGLPHNLLASQIARQAKVTGQAEKFAVVFAAMGITYEESAFFIREFEESGALERTVLFLNLADDPAIERIITPRLALTTAEYLAFDKGMHVLVVLTDLTNYCEALREIAAAREEVPGRRGYPGYIYTDLASLYERAGRIRGREGSITQIPILTMPDDDITHPVPDLTGYITEGQIVLSRDLHRKGIYPPVDVLPCLSRLMQGGIGPGRTRADHAEVKNQLYSAYARGIRLKSLVAVMGEEGLTPLDKLYIRFCDRFENDFIRQASYEDRSFDDTLTLAWDLLSILPKAELKRISTEFIKMYYHGEEILECKGP.

This sequence belongs to the ATPase alpha/beta chains family. As to quaternary structure, has multiple subunits with at least A(3), B(3), C, D, E, F, H, I and proteolipid K(x).

The protein localises to the cell membrane. Its function is as follows. Component of the A-type ATP synthase that produces ATP from ADP in the presence of a proton gradient across the membrane. The B chain is a regulatory subunit. This is A-type ATP synthase subunit B 3 from Methanospirillum hungatei JF-1 (strain ATCC 27890 / DSM 864 / NBRC 100397 / JF-1).